Consider the following 1026-residue polypeptide: Multidrug resistance protein MdtC (1026 aa).

Helical transmembrane passes span 15–35 (ILIA…LPVA), 333–353 (EVEE…FLFL), 360–380 (LIPA…MYLC), 387–407 (LSLM…IVVL), 431–451 (VGFT…PLLL), 463–483 (FAVT…TLTP), 528–548 (LVGV…IAIP), 853–873 (LILI…LYES), 897–917 (LFNA…IGIV), 953–973 (PIMM…LSGG), and 984–1004 (ITIV…TPVV).

Belongs to the resistance-nodulation-cell division (RND) (TC 2.A.6) family. MdtC subfamily. Part of a tripartite efflux system composed of MdtA, MdtB and MdtC. MdtC forms a heteromultimer with MdtB.

It is found in the cell inner membrane. The sequence is that of Multidrug resistance protein MdtC from Salmonella paratyphi C (strain RKS4594).